We begin with the raw amino-acid sequence, 426 residues long: Methionine aminopeptidase 2 (426 aa).

The tract at residues 1-72 (MTSATTTEAT…QEQTNPPTVG (72 aa)) is disordered. Basic and acidic residues predominate over residues 10–34 (TAKDLQEKLSLKENDVVEDDGKVEE). Residues 47-60 (KKKKKKKKSSKKKK) show a composition bias toward basic residues. His-179 provides a ligand contact to substrate. Residues Asp-199, Asp-210, and His-279 each contribute to the a divalent metal cation site. His-287 serves as a coordination point for substrate. Positions 312 and 407 each coordinate a divalent metal cation.

It belongs to the peptidase M24A family. Methionine aminopeptidase eukaryotic type 2 subfamily. It depends on Co(2+) as a cofactor. The cofactor is Zn(2+). Mn(2+) serves as cofactor. Requires Fe(2+) as cofactor.

Its subcellular location is the cytoplasm. It carries out the reaction Release of N-terminal amino acids, preferentially methionine, from peptides and arylamides.. Functionally, cotranslationally removes the N-terminal methionine from nascent proteins. The N-terminal methionine is often cleaved when the second residue in the primary sequence is small and uncharged (Met-Ala-, Cys, Gly, Pro, Ser, Thr, or Val). This chain is Methionine aminopeptidase 2 (fma2), found in Schizosaccharomyces pombe (strain 972 / ATCC 24843) (Fission yeast).